A 173-amino-acid polypeptide reads, in one-letter code: Small ribosomal subunit protein uS7 (173 aa).

This sequence belongs to the universal ribosomal protein uS7 family. As to quaternary structure, part of the 30S ribosomal subunit. Contacts proteins S9 and S11.

In terms of biological role, one of the primary rRNA binding proteins, it binds directly to 16S rRNA where it nucleates assembly of the head domain of the 30S subunit. Is located at the subunit interface close to the decoding center, probably blocks exit of the E-site tRNA. This Orientia tsutsugamushi (strain Ikeda) (Rickettsia tsutsugamushi) protein is Small ribosomal subunit protein uS7.